A 284-amino-acid polypeptide reads, in one-letter code: Tropomyosin (284 aa).

2 disordered regions span residues 1-27 (MDAI…QMEQ) and 99-131 (YERS…KVLE). Positions 1 to 273 (MDAIKKKMQA…KERYKAISDD (273 aa)) form a coiled coil. The segment covering 102-131 (SEEKLNSTTEKLEEASKAADESERNRKVLE) has biased composition (basic and acidic residues).

The protein belongs to the tropomyosin family. In terms of assembly, homodimer.

Functionally, tropomyosin, in association with the troponin complex, plays a central role in the calcium dependent regulation of muscle contraction. The protein is Tropomyosin of Mimachlamys nobilis (Noble scallop).